A 925-amino-acid polypeptide reads, in one-letter code: TBC1 domain family member 2A (925 aa).

Methionine 1 bears the N-acetylmethionine mark. The interval 1–41 (MEGAQESPAESGSSVPWSEEPAGSAKVPEVSLSEESEGCTR) is disordered. The interval 1–171 (MEGAQESPAE…AGNGPALRLE (171 aa)) is interaction with CADH1. A PH domain is found at 47-144 (PPKLCGYLSK…WLQQLQMKRW (98 aa)). Residues 231–278 (NKQTQGANHRPPGEDSPLIEETQREEQPSPPGPGAPGKDPANSLKSSL) form a disordered region. Residues 297 to 435 (SEGLMRNRTA…KVTQDFMKAP (139 aa)) form an interaction with RAC1 region. The stretch at 302 to 475 (RNRTAQEKVL…LNSEIHQVTK (174 aa)) forms a coiled coil. One can recognise a Rab-GAP TBC domain in the interval 622 to 814 (GVPHEHRPRV…QVWDAFLYEG (193 aa)). Residues 872–907 (MKQLRQLRAAHRERLEAELNELEQLKAEYLETRAAQ) are a coiled coil. Positions 904–925 (RAAQGPAVPEGSPSEDEGEAEP) are disordered. Acidic residues predominate over residues 916 to 925 (PSEDEGEAEP). Phosphoserine is present on serine 917.

Interacts with activated RAC1 and CDH1.

The protein localises to the cytoplasm. Its subcellular location is the cytoplasmic vesicle. It localises to the cell junction. Its function is as follows. May act as a GTPase-activating protein for Rab family protein(s). Signal effector acting as a linker between RAC1 and RAB7A, leading to RAB7A inactivation and further inhibition of cadherin degradation. In Bos taurus (Bovine), this protein is TBC1 domain family member 2A (TBC1D2).